A 36-amino-acid polypeptide reads, in one-letter code: Photosystem I reaction center subunit VIII (36 aa).

Residues 8 to 28 form a helical membrane-spanning segment; it reads SLFVPLVGLVFPAIAMASLFL.

It belongs to the PsaI family.

It localises to the plastid. It is found in the chloroplast thylakoid membrane. Functionally, may help in the organization of the PsaL subunit. This is Photosystem I reaction center subunit VIII from Brassica oleracea (Wild cabbage).